The primary structure comprises 352 residues: DNA polymerase IV (352 aa).

One can recognise a UmuC domain in the interval 4 to 185 (IIHVDMDCFF…LPLSKIPGVG (182 aa)). Mg(2+) is bound by residues Asp8 and Asp103. The active site involves Glu104.

Belongs to the DNA polymerase type-Y family. As to quaternary structure, monomer. Requires Mg(2+) as cofactor.

It is found in the cytoplasm. The catalysed reaction is DNA(n) + a 2'-deoxyribonucleoside 5'-triphosphate = DNA(n+1) + diphosphate. In terms of biological role, poorly processive, error-prone DNA polymerase involved in untargeted mutagenesis. Copies undamaged DNA at stalled replication forks, which arise in vivo from mismatched or misaligned primer ends. These misaligned primers can be extended by PolIV. Exhibits no 3'-5' exonuclease (proofreading) activity. May be involved in translesional synthesis, in conjunction with the beta clamp from PolIII. This Enterobacter sp. (strain 638) protein is DNA polymerase IV.